A 300-amino-acid polypeptide reads, in one-letter code: Fe(3+) dicitrate-binding periplasmic protein FecB (300 aa).

The first 21 residues, 1 to 21, serve as a signal peptide directing secretion; the sequence is MLAFIRFLFAGLLLVISHAFA. In terms of domain architecture, Fe/B12 periplasmic-binding spans 39-295; it reads RIVVLELSFA…DTVKIFHHQP (257 aa).

Belongs to the bacterial solute-binding protein 8 family. The complex is composed of two ATP-binding proteins (FecE), two transmembrane proteins (FecC and FecD) and a solute-binding protein (FecB). Interacts with FecC and FecD.

Its subcellular location is the periplasm. Functionally, part of the ABC transporter complex FecBCDE involved in citrate-dependent Fe(3+) uptake. Binds both iron-free and iron-loaded citrate although it binds iron-loaded citrate with a higher affinity. Binds different forms of Fe(3+)-citrate as well as citrate complexed with various representative Fe(3+)-mimics (Ga(3+), Al(3+), Sc(3+) and In(3+)) and a representative divalent metal ion (Mg(2+)). Can also bind various tricarboxylates in iron-free and iron-loaded form. The polypeptide is Fe(3+) dicitrate-binding periplasmic protein FecB (Escherichia coli (strain K12)).